The chain runs to 461 residues: Ribosomal RNA processing protein 1 homolog A (461 aa).

The segment covering 239–252 (QDEEVASDSDESSE) has biased composition (acidic residues). Disordered stretches follow at residues 239-295 (QDEE…GGPV) and 354-461 (EGRR…KRRE). 4 positions are modified to phosphoserine: Ser-245, Ser-247, Ser-250, and Ser-251. Basic and acidic residues predominate over residues 253–267 (GGERGDALSQKRSEK). Basic residues predominate over residues 357–368 (RQKKTKKQKRLL). Positions 371 to 381 (QQERGKGEKEP) are enriched in basic and acidic residues. Residue Ser-383 is modified to Phosphoserine. Position 412 is a phosphothreonine (Thr-412). Residues 425–437 (RGQRGARQRRRTP) are compositionally biased toward basic residues. Gln-427 carries the N5-methylglutamine modification.

This sequence belongs to the RRP1 family. In terms of assembly, interacts with C1QBP. Interacts with RRP1B. Methylated at Gln-427 by N6AMT1. As to expression, ubiquitously expressed in fetal and adult tissues.

It is found in the nucleus. It localises to the nucleolus. In terms of biological role, plays a critical role in the generation of 28S rRNA. The chain is Ribosomal RNA processing protein 1 homolog A (RRP1) from Homo sapiens (Human).